Consider the following 62-residue polypeptide: Conotoxin Im11.9 (62 aa).

A signal peptide spans 1-22; it reads MFRVTSVLLVIVLLNLVVLTNA. Cystine bridges form between Cys23-Cys33, Cys27-Cys38, Cys32-Cys41, and Cys37-Cys46. A propeptide spanning residues 23–49 is cleaved from the precursor; sequence CHMDCSKMTCCSGICCFYCGRPMCPGT.

It belongs to the conotoxin I2 superfamily. In terms of tissue distribution, expressed by the venom duct.

The protein localises to the secreted. Its function is as follows. Probable neurotoxin. The protein is Conotoxin Im11.9 of Conus imperialis (Imperial cone).